Here is a 509-residue protein sequence, read N- to C-terminus: Putative cytochrome P450 CYP13A8 (509 aa).

A heme-binding site is contributed by Cys-455.

Belongs to the cytochrome P450 family. Heme is required as a cofactor.

Functionally, cytochromes P450 are a group of heme-thiolate monooxygenases. They oxidize a variety of structurally unrelated compounds, including steroids, fatty acids, and xenobiotics. In Caenorhabditis elegans, this protein is Putative cytochrome P450 CYP13A8 (cyp-13A8).